Here is a 356-residue protein sequence, read N- to C-terminus: Probable arabinogalactan endo-beta-1,4-galactanase A (356 aa).

A signal peptide spans M1–A21. N-linked (GlcNAc...) asparagine glycosylation is present at N133. E157 serves as the catalytic Proton donor. Catalysis depends on E268, which acts as the Nucleophile.

This sequence belongs to the glycosyl hydrolase 53 family.

It localises to the secreted. The catalysed reaction is The enzyme specifically hydrolyzes (1-&gt;4)-beta-D-galactosidic linkages in type I arabinogalactans.. In terms of biological role, endogalactanase involved in the degradation of plant cell wall polysaccharides, and more particularly of hairy regions of pectin. The protein is Probable arabinogalactan endo-beta-1,4-galactanase A (galA) of Aspergillus fumigatus (strain CBS 144.89 / FGSC A1163 / CEA10) (Neosartorya fumigata).